Reading from the N-terminus, the 818-residue chain is Glycogen phosphorylase (818 aa).

An N6-(pyridoxal phosphate)lysine modification is found at lysine 667.

The protein belongs to the glycogen phosphorylase family. Pyridoxal 5'-phosphate is required as a cofactor.

The catalysed reaction is [(1-&gt;4)-alpha-D-glucosyl](n) + phosphate = [(1-&gt;4)-alpha-D-glucosyl](n-1) + alpha-D-glucose 1-phosphate. Phosphorylase is an important allosteric enzyme in carbohydrate metabolism. Enzymes from different sources differ in their regulatory mechanisms and in their natural substrates. However, all known phosphorylases share catalytic and structural properties. The chain is Glycogen phosphorylase (glgP) from Pasteurella multocida (strain Pm70).